The chain runs to 442 residues: tRNA(Ile)-lysidine synthase (442 aa).

Serine 27 to serine 32 lines the ATP pocket.

This sequence belongs to the tRNA(Ile)-lysidine synthase family.

The protein resides in the cytoplasm. It carries out the reaction cytidine(34) in tRNA(Ile2) + L-lysine + ATP = lysidine(34) in tRNA(Ile2) + AMP + diphosphate + H(+). Functionally, ligates lysine onto the cytidine present at position 34 of the AUA codon-specific tRNA(Ile) that contains the anticodon CAU, in an ATP-dependent manner. Cytidine is converted to lysidine, thus changing the amino acid specificity of the tRNA from methionine to isoleucine. This Photorhabdus laumondii subsp. laumondii (strain DSM 15139 / CIP 105565 / TT01) (Photorhabdus luminescens subsp. laumondii) protein is tRNA(Ile)-lysidine synthase.